A 545-amino-acid polypeptide reads, in one-letter code: MSSKIERIFSGPALKINTYLDKLPKIYNVFFIASISTIAGMMFGFDISSMSAFIGAEHYMRYFNSPGSDIQGFITSSMALGSFFGSIASSFVSEPFGRRLSLLTCAFFWMVGAAIQSSVQNRAQLIIGRIISGIGVGFGSAVAPVYGAELAPRKIRGLIGGMFQFFVTLGIMIMFYLSFGLGHINGVASFRIAWGLQIVPGLCLFLGCFFIPESPRWLAKQGQWEAAEEIVAKIQAHGDRENPDVLIEISEIKDQLLLEESSKQIGYATLFTKKYIQRTFTAIFAQIWQQLTGMNVMMYYIVYIFQMAGYSGNSNLVASSIQYVINTCVTVPALYFIDKVGRRPLLIGGATMMMAFQFGLAGILGQYSIPWPDSGNDSVNIRIPEDNKSASKGAIACCYLFVASFAFTWGVGIWVYCAEIWGDNRVAQRGNAISTSANWILNFAIAMYTPTGFKNISWKTYIIYGVFCFAMATHVYFGFPETKGKRLEEIGQMWEERVPAWRSRSWQPTVPIASDAELARKMEVEHEEDKLMNEDSNSESRENQA.

A run of 9 helical transmembrane segments spans residues 29 to 49, 72 to 92, 100 to 120, 125 to 145, 157 to 177, 192 to 212, 291 to 311, 317 to 337, and 345 to 365; these read VFFIASISTIAGMMFGFDISS, GFITSSMALGSFFGSIASSFV, LSLLTCAFFWMVGAAIQSSVQ, LIIGRIISGIGVGFGSAVAPV, GLIGGMFQFFVTLGIMIMFYL, IAWGLQIVPGLCLFLGCFFIP, LTGMNVMMYYIVYIFQMAGYS, VASSIQYVINTCVTVPALYFI, and LLIGGATMMMAFQFGLAGILG. N-linked (GlcNAc...) asparagine glycans are attached at residues Asn-376 and Asn-387. A run of 2 helical transmembrane segments spans residues 395 to 415 and 433 to 453; these read IACCYLFVASFAFTWGVGIWV and ISTSANWILNFAIAMYTPTGF. N-linked (GlcNAc...) asparagine glycosylation occurs at Asn-455. A helical transmembrane segment spans residues 460-480; the sequence is TYIIYGVFCFAMATHVYFGFP. The interval 524–545 is disordered; it reads VEHEEDKLMNEDSNSESRENQA.

This sequence belongs to the major facilitator superfamily. Sugar transporter (TC 2.A.1.1) family. As to quaternary structure, interacts with the human complement factors FH and C4BP. Also binds human immunodeficiency virus (HIV) protein gp160.

The protein resides in the cell membrane. In terms of biological role, high-affinity glucose transporter. Acts as a multifunctional complement-evasion molecule that causes down-regulation of complement activation by acquisition of human complement factors FH and C4BP. Also functions as a human immunodeficiency virus (HIV) receptor via binding the viral gp160 protein. Modulates hyphae formation. The polypeptide is High-affinity glucose transporter 1 (Candida albicans (strain SC5314 / ATCC MYA-2876) (Yeast)).